Consider the following 629-residue polypeptide: MGLSRYLSRRHHWVIQYCALLLFLYFIYSYVAVSNDAPRLNEEIPVFREFSEDLPQGSRKFPEQKPAAALGDEALDPFEKYRGHEKIKWEDEVAYEKDKAREGPGEWGKPVKLPDDKETEKEALSLYKANGYNAYISDMISLNRSIKDIRHKECKKMTYSAKLPTVSVIFPFHEEHNSTLLRSVYSVINRSPPELLKEIILVDDFSEKPALRQPLEDFLKKNKIDHIVKILRTKKREGLIRGRQLGAQEATGEILIFLDAHSECNYNWLPPLLDPIADDYRTVVCPFVDVIDCETYEIRPQDEGARGSFDWAFNYKRLPLTKKDRENPTKPFDSPVMAGGYFAISAKWFWELGGYDEGLDIWGGEQYELSFKVWQCHGKMVDAPCSRVAHIYRCKYAPFKNAGMGDFVSRNYKRVAEVWMDEYKETLYKHRPGIGNADAGDLKLMKGIREKLQCKSFDWFMKEIAFDQDKYYPAIEPKASAEGEIRHVASNLCIDTQFKEQNQRFGLRKCASEDKDGGGEQDLRLTRWHDIRPKGRKICFDVSTSVDKAPIILFDCHSMKGNQLFKYRMPQKQIYHPVSGQCLTADENGKGFLHMKKCDSSSKLQQWAWQTIDQELLDQRQANEHKELE.

The Cytoplasmic segment spans residues 1 to 12; sequence MGLSRYLSRRHH. Residues 13 to 33 form a helical; Signal-anchor for type II membrane protein membrane-spanning segment; sequence WVIQYCALLLFLYFIYSYVAV. Residues 34–629 lie on the Lumenal side of the membrane; sequence SNDAPRLNEE…RQANEHKELE (596 aa). N-linked (GlcNAc...) asparagine glycosylation is found at asparagine 143 and asparagine 177. 5 cysteine pairs are disulfide-bonded: cysteine 154-cysteine 385, cysteine 376-cysteine 454, cysteine 493-cysteine 510, cysteine 539-cysteine 556, and cysteine 582-cysteine 598. The catalytic subdomain A stretch occupies residues 163–275; the sequence is LPTVSVIFPF…YNWLPPLLDP (113 aa). Aspartate 204 and arginine 236 together coordinate substrate. Mn(2+)-binding residues include aspartate 259 and histidine 261. A catalytic subdomain B region spans residues 331 to 393; that stretch reads PFDSPVMAGG…PCSRVAHIYR (63 aa). Residue tryptophan 362 participates in substrate binding. Histidine 390 is a binding site for Mn(2+). Arginine 393 provides a ligand contact to substrate. A flexible loop region spans residues 393-406; the sequence is RCKYAPFKNAGMGD. In terms of domain architecture, Ricin B-type lectin spans 526–629; it reads TRWHDIRPKG…RQANEHKELE (104 aa).

The protein belongs to the glycosyltransferase 2 family. GalNAc-T subfamily. The cofactor is Mn(2+).

It localises to the golgi apparatus membrane. It carries out the reaction L-seryl-[protein] + UDP-N-acetyl-alpha-D-galactosamine = a 3-O-[N-acetyl-alpha-D-galactosaminyl]-L-seryl-[protein] + UDP + H(+). The catalysed reaction is L-threonyl-[protein] + UDP-N-acetyl-alpha-D-galactosamine = a 3-O-[N-acetyl-alpha-D-galactosaminyl]-L-threonyl-[protein] + UDP + H(+). The protein operates within protein modification; protein glycosylation. May catalyze the initial reaction in O-linked oligosaccharide biosynthesis, the transfer of an N-acetyl-D-galactosamine residue to a serine or threonine residue on the protein receptor. This Caenorhabditis briggsae protein is Putative polypeptide N-acetylgalactosaminyltransferase 10.